Consider the following 67-residue polypeptide: Protein AaeX (67 aa).

The next 2 helical transmembrane spans lie at 3 to 23 (LFPV…ELIL) and 43 to 63 (FVWH…YLIS).

Belongs to the AaeX family.

Its subcellular location is the cell membrane. This is Protein AaeX from Enterobacter sp. (strain 638).